We begin with the raw amino-acid sequence, 343 residues long: Uroporphyrinogen decarboxylase (343 aa).

Substrate-binding positions include 24 to 28 (RQAGR), Phe-43, Asp-74, Tyr-151, Ser-206, and His-321.

It belongs to the uroporphyrinogen decarboxylase family. In terms of assembly, homodimer.

The protein resides in the cytoplasm. It catalyses the reaction uroporphyrinogen III + 4 H(+) = coproporphyrinogen III + 4 CO2. Its pathway is porphyrin-containing compound metabolism; protoporphyrin-IX biosynthesis; coproporphyrinogen-III from 5-aminolevulinate: step 4/4. Its function is as follows. Catalyzes the decarboxylation of four acetate groups of uroporphyrinogen-III to yield coproporphyrinogen-III. The chain is Uroporphyrinogen decarboxylase from Thermosynechococcus vestitus (strain NIES-2133 / IAM M-273 / BP-1).